The primary structure comprises 242 residues: Lactate utilization protein A 2 (242 aa).

Belongs to the LutA/YkgE family.

Functionally, is involved in L-lactate degradation and allows cells to grow with lactate as the sole carbon source. The chain is Lactate utilization protein A 2 from Bacillus cereus (strain ZK / E33L).